The sequence spans 326 residues: Septum site-determining protein minD homolog, chloroplastic (326 aa).

Residues 1–62 constitute a chloroplast transit peptide; the sequence is MASLRLFSTN…LAGETPRIVV (62 aa). Position 67 to 74 (67 to 74) interacts with ATP; that stretch reads KGGVGKTT.

Belongs to the ParA family. MinD subfamily. Homodimer. Interacts with MINE1. Binds to ARC3. Interacts with MCD1. Interacts with CDP1/PARC6.

The protein localises to the plastid. The protein resides in the chloroplast inner membrane. Its activity is regulated as follows. Stimulated ATPase activity by MINE1. Its function is as follows. Together with ARC3 and MCD1, regulates FtsZ ring positioning in chloroplasts in an ARC6-dependent manner. Calcium-dependent ATPase required for the correct placement of the plastid division site. Inhibits FtsZ filament and ring formation in the plastid. Mediates inhibition of plastid division. In cooperation with MINE1, prevents FtsZ ring formation anywhere outside of the mid-plastids. The sequence is that of Septum site-determining protein minD homolog, chloroplastic from Arabidopsis thaliana (Mouse-ear cress).